We begin with the raw amino-acid sequence, 475 residues long: 1,3-beta-glucanosyltransferase gel2 (475 aa).

The signal sequence occupies residues 1 to 21; the sequence is MLPTYVRLFTAVCALATTASA. An intrachain disulfide couples Cys-69 to Cys-98. Tyr-87, Asn-159, Glu-160, and Asp-201 together coordinate (1,3-beta-D-glucosyl)n. Glu-160 acts as the Proton donor in catalysis. 2 disulfides stabilise this stretch: Cys-215–Cys-350 and Cys-234–Cys-265. A glycan (N-linked (GlcNAc...) asparagine) is linked at Asn-236. The active-site Nucleophile is Glu-262. Tyr-294 lines the (1,3-beta-D-glucosyl)n pocket. Residues Asn-311, Asn-339, and Asn-357 are each glycosylated (N-linked (GlcNAc...) asparagine). Residues 420-451 form a disordered region; the sequence is GESNTPGAHSSGSTSGSSSSGGSSSSSSDKES. Positions 429 to 446 are enriched in low complexity; that stretch reads SSGSTSGSSSSGGSSSSS. Ser-451 is lipidated: GPI-like-anchor amidated serine. Residues 452 to 475 constitute a propeptide, removed in mature form; that stretch reads AAGTISVPFVGLLSAASFMAFFML.

It belongs to the glycosyl hydrolase 72 family. The GPI-like anchor contains a phosphoceramide lipid group.

The protein localises to the cell membrane. Splits internally a 1,3-beta-glucan molecule and transfers the newly generated reducing end (the donor) to the non-reducing end of another 1,3-beta-glucan molecule (the acceptor) forming a 1,3-beta linkage, resulting in the elongation of 1,3-beta-glucan chains in the cell wall. Involved in cell wall morphogenesis. In Aspergillus fumigatus (strain CBS 144.89 / FGSC A1163 / CEA10) (Neosartorya fumigata), this protein is 1,3-beta-glucanosyltransferase gel2 (gel2).